Here is a 786-residue protein sequence, read N- to C-terminus: MSFTSRSLLASFTGCLLYGTPAIADNGSEPVSPENGIVFPLQTDAVNSCEVPDKKSKEEEDQQPVLIQADSVEASNNSKAVYKGNVHIIKGRQEIKADSITLHQQENIAIAEGNVDYSSMEMRTTSDKVTTNLSTEDTTMVNTAYKMSCQPIRGQAGRVLKTGQEIYQLEDASFTTCPADDNSWRFKASDIELDQSDEWATFYNARFEVLDVPIFYLPYVTVPVGDTRKTGVLIPSIGLDSKNGFELSVPIYWNIAPNYDATTTINYMERRGTQLETEFRYLTELGKGTVDAEYLNEDDKFKDKGSRWGVSWDHSGIYQQHWKFDVEYSKVSDIDYFQDLNSSIGTRDEGQLQQSGEVSYRSQDWDMTMRVRDFQVLVEEQTPYRLMPQIEFNYYAPQFYSEFDFNLHSHISKFTTDDKAKPSATRVHLEPKLSLPLSGTWWSLIPETSLLYTYYQQDFDKQPVGPNGSLNLDHEVSRTIPEVRINGAIYLDSTHKFLGEYLQTLEPKIQYLYVPEVDQSNIYGGTGDGGYDSSKLQLDYYGLFRDRQYSGVDYIADANQFSVGATSRFYDDAYKERMNISFGQILYLNGSGTEQNNDDKNSSAWAMESDFNYDDYLFYHGGIQYDSNVSELQVANSTLEYRFSKGYIQANYRYVSKNYIESNVNFEDDLSLITQHGIYQAGLLSEYNLGRNWALKGQYFHDTKEDQMIEALVGVTYLSDCWSFGLTYSDQLIAPESAKTIGTYEPEYESNLMLSIAIRGLGNNTGITSGSANNALDYGRPFYLNN.

The signal sequence occupies residues 1–24 (MSFTSRSLLASFTGCLLYGTPAIA).

The protein belongs to the LptD family. As to quaternary structure, component of the lipopolysaccharide transport and assembly complex. Interacts with LptE and LptA.

The protein localises to the cell outer membrane. Its function is as follows. Together with LptE, is involved in the assembly of lipopolysaccharide (LPS) at the surface of the outer membrane. The sequence is that of LPS-assembly protein LptD from Aliivibrio fischeri (strain ATCC 700601 / ES114) (Vibrio fischeri).